The following is a 226-amino-acid chain: 7-cyano-7-deazaguanine synthase (226 aa).

10–20 (LSGGLDSATAA) is a binding site for ATP. Residues C191, C199, C202, and C205 each coordinate Zn(2+).

Belongs to the QueC family. The cofactor is Zn(2+).

The enzyme catalyses 7-carboxy-7-deazaguanine + NH4(+) + ATP = 7-cyano-7-deazaguanine + ADP + phosphate + H2O + H(+). It participates in purine metabolism; 7-cyano-7-deazaguanine biosynthesis. In terms of biological role, catalyzes the ATP-dependent conversion of 7-carboxy-7-deazaguanine (CDG) to 7-cyano-7-deazaguanine (preQ(0)). The sequence is that of 7-cyano-7-deazaguanine synthase from Prochlorococcus marinus (strain MIT 9303).